The sequence spans 241 residues: ATP synthase subunit a (241 aa).

A run of 5 helical transmembrane segments spans residues 30 to 50, 91 to 111, 128 to 148, 193 to 213, and 214 to 234; these read GQVFLTSWILLGALLVFISLG, FIGTLFLFVFVSNWGGALIPW, INTTIALALLVSLSYFYAGLS, LVVGVLVFLVPLILPIPVMFL, and GLFTSAIQALIFATLAAYYIG.

The protein belongs to the ATPase A chain family. In terms of assembly, F-type ATPases have 2 components, CF(1) - the catalytic core - and CF(0) - the membrane proton channel. CF(1) has five subunits: alpha(3), beta(3), gamma(1), delta(1), epsilon(1). CF(0) has four main subunits: a, b, b' and c.

The protein localises to the cellular thylakoid membrane. Functionally, key component of the proton channel; it plays a direct role in the translocation of protons across the membrane. This Prochlorococcus marinus (strain MIT 9215) protein is ATP synthase subunit a.